A 419-amino-acid chain; its full sequence is uncharacterized protein (419 aa).

A run of 11 helical transmembrane segments spans residues Met1–Leu21, Val24–Asp44, Ile66–Thr86, Ala101–Ile121, Ser174–Ala194, Asn216–Leu236, Ile242–Gly262, Pro280–Leu300, Ser311–Ala331, Leu349–Phe369, and Ile396–Val416.

The protein belongs to the CitM (TC 2.A.11) transporter family.

Its subcellular location is the cell membrane. This is an uncharacterized protein from Haemophilus influenzae (strain ATCC 51907 / DSM 11121 / KW20 / Rd).